Here is a 471-residue protein sequence, read N- to C-terminus: MTFRLYDTATREVRDFVPLEEGKAGLYVCGLTVQSEPHVGHVRSGVNFDVLQRWLRHLGYDVTFIRNVTDIDDKILVKSAEQGLAWYQLAYRMKRQLDRAYDDLNVAPPTYEPAATGHVPEMIVLIQELIAKGHAYAAEDGSGDVYFDVRSWPQYGELTRQGIDDMEAAEDADPRGKRDPRDFALWKGWKKDSEPETAAWPSPWGPGRPGWHIECSAMAGKYLGPAFDIHGGGVDLRFPHHENEQAQSRAAGRPFATYWMHNAWITTAGEKMSKSLGNSLTIPAVLQKYRGIELRYYLVAAHYRSHVEFSFEALDEAATGFRRIENFLDRAADVLGGIGGGIACADFLNAMNDDLGTPAAVAAIHEVVREGNKLLAAGDSPALRGNAASVVAMLDVLGLDPADPAWSSPGGGRTAERLETVVEGLVSDLLTQREKARADRDFVSADAIRDRLHAVGVQLEDTPDGPKWSLS.

Residue cysteine 29 participates in Zn(2+) binding. A 'HIGH' region motif is present at residues 31-41; sequence LTVQSEPHVGH. Cysteine 215, histidine 240, and glutamate 244 together coordinate Zn(2+). Positions 271-275 match the 'KMSKS' region motif; the sequence is KMSKS. Lysine 274 serves as a coordination point for ATP.

Belongs to the class-I aminoacyl-tRNA synthetase family. As to quaternary structure, monomer. Zn(2+) is required as a cofactor.

It localises to the cytoplasm. The enzyme catalyses tRNA(Cys) + L-cysteine + ATP = L-cysteinyl-tRNA(Cys) + AMP + diphosphate. This Nocardioides sp. (strain ATCC BAA-499 / JS614) protein is Cysteine--tRNA ligase.